The chain runs to 311 residues: Avirulence protein ATR1 (311 aa).

An N-terminal signal peptide occupies residues Met-1–Ala-15. The RxLR-dEER signature appears at Arg-48–Arg-62. WY domain stretches follow at residues Asp-127–Val-209 and Glu-210–Val-311.

The protein belongs to the RxLR effector family. As to quaternary structure, monomer. Interacts with defense protein RPP1 from several ecotypes including RPP1-NdA, RPP1-WsB, RPP1-EstA and RPP1-ZdrA, via their leucine-rich repeats (LLRs).

Its subcellular location is the secreted. It is found in the host cytoplasm. Functionally, secreted effector that acts as an elicitor of hypersensitive response (HR) specifically on plants carrying both defense protein RPP1 from several ecotypes including RPP1-NdA, RPP1-WsB, RPP1-EstA and RPP1-ZdrA. The chain is Avirulence protein ATR1 from Hyaloperonospora arabidopsidis (strain Emoy2) (Downy mildew agent).